Here is a 257-residue protein sequence, read N- to C-terminus: ATP synthase delta chain, chloroplastic (257 aa).

The transit peptide at 1–70 directs the protein to the chloroplast; the sequence is MAALQNPVAL…PRGGALGTRM (70 aa).

It belongs to the ATPase delta chain family. In terms of assembly, F-type ATPases have 2 components, CF(1) - the catalytic core - and CF(0) - the membrane proton channel. CF(1) has five subunits: alpha(3), beta(3), gamma(1), delta(1), epsilon(1). CF(0) has three main subunits: a, b and c.

The protein resides in the plastid. It localises to the chloroplast thylakoid membrane. Functionally, this protein seems to be part of the stalk that links CF(0) to CF(1). It either transmits conformational changes from CF(0) into CF(1) or is implicated in proton conduction. The chain is ATP synthase delta chain, chloroplastic (ATPD) from Spinacia oleracea (Spinach).